The chain runs to 152 residues: Large ribosomal subunit protein bL9 (152 aa).

This sequence belongs to the bacterial ribosomal protein bL9 family.

Its function is as follows. Binds to the 23S rRNA. The polypeptide is Large ribosomal subunit protein bL9 (Prochlorococcus marinus (strain NATL2A)).